The sequence spans 256 residues: Type III pantothenate kinase (256 aa).

6 to 13 (DVGNSNIV) lines the ATP pocket. Residues tyrosine 100 and 107-110 (GADR) each bind substrate. The active-site Proton acceptor is aspartate 109. Aspartate 129 contacts K(+). An ATP-binding site is contributed by threonine 132. Substrate is bound at residue threonine 184.

Belongs to the type III pantothenate kinase family. In terms of assembly, homodimer. The cofactor is NH4(+). It depends on K(+) as a cofactor.

Its subcellular location is the cytoplasm. It catalyses the reaction (R)-pantothenate + ATP = (R)-4'-phosphopantothenate + ADP + H(+). Its pathway is cofactor biosynthesis; coenzyme A biosynthesis; CoA from (R)-pantothenate: step 1/5. Functionally, catalyzes the phosphorylation of pantothenate (Pan), the first step in CoA biosynthesis. The sequence is that of Type III pantothenate kinase from Geotalea uraniireducens (strain Rf4) (Geobacter uraniireducens).